Here is a 469-residue protein sequence, read N- to C-terminus: Probable cobyric acid synthase (469 aa).

The region spanning 241–427 is the GATase cobBQ-type domain; the sequence is SGSIGIVRYP…VHGILENNEF (187 aa). Cysteine 319 serves as the catalytic Nucleophile. The active site involves histidine 419.

Belongs to the CobB/CobQ family. CobQ subfamily.

Its pathway is cofactor biosynthesis; adenosylcobalamin biosynthesis. Its function is as follows. Catalyzes amidations at positions B, D, E, and G on adenosylcobyrinic A,C-diamide. NH(2) groups are provided by glutamine, and one molecule of ATP is hydrogenolyzed for each amidation. The chain is Probable cobyric acid synthase from Picrophilus torridus (strain ATCC 700027 / DSM 9790 / JCM 10055 / NBRC 100828 / KAW 2/3).